We begin with the raw amino-acid sequence, 198 residues long: HTH-type transcriptional regulator BetI (198 aa).

Positions 8 to 68 constitute an HTH tetR-type domain; that stretch reads PLRRRELIDA…ATMRHLLREL (61 aa). A DNA-binding region (H-T-H motif) is located at residues 31-50; it reads TVAQIAHEAGVSPALAHHYF.

Its pathway is amine and polyamine biosynthesis; betaine biosynthesis via choline pathway [regulation]. In terms of biological role, repressor involved in the biosynthesis of the osmoprotectant glycine betaine. It represses transcription of the choline transporter BetT and the genes of BetAB involved in the synthesis of glycine betaine. In Brucella canis (strain ATCC 23365 / NCTC 10854 / RM-666), this protein is HTH-type transcriptional regulator BetI.